The chain runs to 40 residues: Biotin carboxylase (40 aa).

A Biotin carboxylation domain is found at isoleucine 1–arginine 40. Residues leucine 13–arginine 27 form the ATP-grasp domain.

In terms of assembly, acetyl-CoA carboxylase is a heterohexamer of biotin carboxyl carrier protein, biotin carboxylase and the two subunits of carboxyl transferase in a 2:2 complex. Mg(2+) serves as cofactor. The cofactor is Mn(2+).

It catalyses the reaction N(6)-biotinyl-L-lysyl-[protein] + hydrogencarbonate + ATP = N(6)-carboxybiotinyl-L-lysyl-[protein] + ADP + phosphate + H(+). The protein operates within lipid metabolism; malonyl-CoA biosynthesis; malonyl-CoA from acetyl-CoA: step 1/1. Functionally, this protein is a component of the acetyl coenzyme A carboxylase complex; first, biotin carboxylase catalyzes the carboxylation of the carrier protein and then the transcarboxylase transfers the carboxyl group to form malonyl-CoA. This Populus euphratica (Euphrates poplar) protein is Biotin carboxylase.